A 108-amino-acid chain; its full sequence is ER membrane protein complex subunit 6 (108 aa).

3 helical membrane passes run 21 to 41, 45 to 65, and 86 to 106; these read VVSF…GILG, YEGL…LFAL, and ILDG…LVYV.

The protein belongs to the EMC6 family.

The protein resides in the endoplasmic reticulum membrane. In Schizosaccharomyces pombe (strain 972 / ATCC 24843) (Fission yeast), this protein is ER membrane protein complex subunit 6.